Consider the following 298-residue polypeptide: Lipoyl synthase (298 aa).

[4Fe-4S] cluster contacts are provided by Cys-40, Cys-45, Cys-51, Cys-67, Cys-71, Cys-74, and Ser-280. The region spanning 53-269 is the Radical SAM core domain; sequence AVRKTATFMI…KEIALSKGFS (217 aa).

It belongs to the radical SAM superfamily. Lipoyl synthase family. [4Fe-4S] cluster serves as cofactor.

The protein localises to the cytoplasm. The catalysed reaction is [[Fe-S] cluster scaffold protein carrying a second [4Fe-4S](2+) cluster] + N(6)-octanoyl-L-lysyl-[protein] + 2 oxidized [2Fe-2S]-[ferredoxin] + 2 S-adenosyl-L-methionine + 4 H(+) = [[Fe-S] cluster scaffold protein] + N(6)-[(R)-dihydrolipoyl]-L-lysyl-[protein] + 4 Fe(3+) + 2 hydrogen sulfide + 2 5'-deoxyadenosine + 2 L-methionine + 2 reduced [2Fe-2S]-[ferredoxin]. It participates in protein modification; protein lipoylation via endogenous pathway; protein N(6)-(lipoyl)lysine from octanoyl-[acyl-carrier-protein]. Its function is as follows. Catalyzes the radical-mediated insertion of two sulfur atoms into the C-6 and C-8 positions of the octanoyl moiety bound to the lipoyl domains of lipoate-dependent enzymes, thereby converting the octanoylated domains into lipoylated derivatives. The polypeptide is Lipoyl synthase (Bacillus anthracis (strain A0248)).